The following is a 749-amino-acid chain: Subtilisin-like protease SBT4.14 (749 aa).

An N-terminal signal peptide occupies residues 1–28; the sequence is MIRSKCSCHHHLLVLVMVVLWISPRYAS. Residues 29–115 constitute a propeptide, activation peptide; that stretch reads AEDEHAKDFY…VSRNQYRKLH (87 aa). In terms of domain architecture, Inhibitor I9 spans 38–115; the sequence is YIIYLGDRPD…VSRNQYRKLH (78 aa). The Peptidase S8 domain maps to 119–595; it reads SWDFVGLPLT…GGQINPRRAA (477 aa). Catalysis depends on D145, which acts as the Charge relay system. N-linked (GlcNAc...) asparagine glycosylation is present at N176. H210 serves as the catalytic Charge relay system. N-linked (GlcNAc...) asparagine glycans are attached at residues N225, N233, N446, and N458. The active-site Charge relay system is the S536. N-linked (GlcNAc...) asparagine glycosylation occurs at N618.

It belongs to the peptidase S8 family. The C-terminal propeptide is autocleaved. In terms of tissue distribution, expressed only in roots, particularly in xylem.

This is Subtilisin-like protease SBT4.14 from Arabidopsis thaliana (Mouse-ear cress).